We begin with the raw amino-acid sequence, 75 residues long: Cytochrome c oxidase subunit 6C (75 aa).

Residues 1–13 are Mitochondrial matrix-facing; sequence MAPEVLPKPQMRG. Residues 14-54 form a helical membrane-spanning segment; it reads LLARRLRFHMVTGFVLSLGVAALYKVGVADKRKKAYADFYR. Residues 55–75 are Mitochondrial intermembrane-facing; the sequence is NYDAMKDFEEMRKAGIFQSVK.

This sequence belongs to the cytochrome c oxidase subunit 6c family. In terms of assembly, component of the cytochrome c oxidase (complex IV, CIV), a multisubunit enzyme composed of 14 subunits. The complex is composed of a catalytic core of 3 subunits MT-CO1, MT-CO2 and MT-CO3, encoded in the mitochondrial DNA, and 11 supernumerary subunits COX4I, COX5A, COX5B, COX6A, COX6B, COX6C, COX7A, COX7B, COX7C, COX8 and NDUFA4, which are encoded in the nuclear genome. The complex exists as a monomer or a dimer and forms supercomplexes (SCs) in the inner mitochondrial membrane with NADH-ubiquinone oxidoreductase (complex I, CI) and ubiquinol-cytochrome c oxidoreductase (cytochrome b-c1 complex, complex III, CIII), resulting in different assemblies (supercomplex SCI(1)III(2)IV(1) and megacomplex MCI(2)III(2)IV(2)).

The protein resides in the mitochondrion inner membrane. The protein operates within energy metabolism; oxidative phosphorylation. In terms of biological role, component of the cytochrome c oxidase, the last enzyme in the mitochondrial electron transport chain which drives oxidative phosphorylation. The respiratory chain contains 3 multisubunit complexes succinate dehydrogenase (complex II, CII), ubiquinol-cytochrome c oxidoreductase (cytochrome b-c1 complex, complex III, CIII) and cytochrome c oxidase (complex IV, CIV), that cooperate to transfer electrons derived from NADH and succinate to molecular oxygen, creating an electrochemical gradient over the inner membrane that drives transmembrane transport and the ATP synthase. Cytochrome c oxidase is the component of the respiratory chain that catalyzes the reduction of oxygen to water. Electrons originating from reduced cytochrome c in the intermembrane space (IMS) are transferred via the dinuclear copper A center (CU(A)) of subunit 2 and heme A of subunit 1 to the active site in subunit 1, a binuclear center (BNC) formed by heme A3 and copper B (CU(B)). The BNC reduces molecular oxygen to 2 water molecules using 4 electrons from cytochrome c in the IMS and 4 protons from the mitochondrial matrix. This Macaca silenus (Lion-tailed macaque) protein is Cytochrome c oxidase subunit 6C (COX6C).